Consider the following 271-residue polypeptide: MDDFASLPLVIEPADLQARLSAPELILVDLTSAARYAEGHIPGARFVDPKRTQLGQPPAPGLQPPREQLESLFGELGHRPEAVYVVYDDEGGGWAGRFIWLLDVIGQQRYHYLNGGLTAWLAEDRPLSRELPAPAGGPVALSLHDEPTASRDYLLGRLGAADLAIWDARSPQEYRGEKVLAAKGGHIPGAVNFEWTAAMDPSRALRIRTDIAGRLEELGITPDKEIVTHCQTHHRSGLTYLIAKALGYPRVKGYAGSWGEWGNHPDTPVEL.

2 Rhodanese domains span residues 21 to 129 (SAPE…PLSR) and 159 to 270 (GAAD…TPVE). The active-site Cysteine persulfide intermediate is the cysteine 230. Arginine 235 contributes to the substrate binding site.

It localises to the cytoplasm. It catalyses the reaction thiosulfate + hydrogen cyanide = thiocyanate + sulfite + 2 H(+). The polypeptide is Thiosulfate sulfurtransferase (rhdA) (Azotobacter vinelandii).